We begin with the raw amino-acid sequence, 189 residues long: Xanthine phosphoribosyltransferase (189 aa).

Leucine 20 and asparagine 27 together coordinate xanthine. 128–132 (ANGQA) is a binding site for 5-phospho-alpha-D-ribose 1-diphosphate. Xanthine is bound at residue lysine 156.

It belongs to the purine/pyrimidine phosphoribosyltransferase family. Xpt subfamily. As to quaternary structure, homodimer.

It localises to the cytoplasm. It carries out the reaction XMP + diphosphate = xanthine + 5-phospho-alpha-D-ribose 1-diphosphate. The protein operates within purine metabolism; XMP biosynthesis via salvage pathway; XMP from xanthine: step 1/1. In terms of biological role, converts the preformed base xanthine, a product of nucleic acid breakdown, to xanthosine 5'-monophosphate (XMP), so it can be reused for RNA or DNA synthesis. The sequence is that of Xanthine phosphoribosyltransferase from Leuconostoc mesenteroides subsp. mesenteroides (strain ATCC 8293 / DSM 20343 / BCRC 11652 / CCM 1803 / JCM 6124 / NCDO 523 / NBRC 100496 / NCIMB 8023 / NCTC 12954 / NRRL B-1118 / 37Y).